The chain runs to 334 residues: Adenine deaminase (334 aa).

Zn(2+)-binding residues include H17, H19, and H197. E200 serves as the catalytic Proton donor. D278 is a Zn(2+) binding site. Residue D279 coordinates substrate.

Belongs to the metallo-dependent hydrolases superfamily. Adenosine and AMP deaminases family. Adenine deaminase type 2 subfamily. Zn(2+) serves as cofactor.

The catalysed reaction is adenine + H2O + H(+) = hypoxanthine + NH4(+). Its function is as follows. Catalyzes the hydrolytic deamination of adenine to hypoxanthine. Plays an important role in the purine salvage pathway and in nitrogen catabolism. The protein is Adenine deaminase of Rhodospirillum rubrum (strain ATCC 11170 / ATH 1.1.1 / DSM 467 / LMG 4362 / NCIMB 8255 / S1).